A 46-amino-acid polypeptide reads, in one-letter code: Light-harvesting protein B-800/850 beta 2 chain (46 aa).

Residues 2 to 25 (AERSLSGLTEEEAVAVHAQFQTTF) lie on the Cytoplasmic side of the membrane. Positions 18 and 36 each coordinate a bacteriochlorophyll. Residues 26-46 (SAFIVLAAVAHVLVWVWKPWF) form a helical membrane-spanning segment.

This sequence belongs to the antenna complex beta subunit family. In terms of assembly, the core complex is formed by different alpha and beta chains, binding bacteriochlorophyll molecules, and arranged most probably in tetrameric structures disposed around the reaction center.

It is found in the cell inner membrane. Antenna complexes are light-harvesting systems, which transfer the excitation energy to the reaction centers. In Magnetospirillum molischianum (Rhodospirillum molischianum), this protein is Light-harvesting protein B-800/850 beta 2 chain (B2).